We begin with the raw amino-acid sequence, 446 residues long: ATP synthase subunit b-delta (446 aa).

The ATP synthase subunit b stretch occupies residues 1–168; sequence MSTFIGQLFG…PATADVDYPL (168 aa). The chain crosses the membrane as a helical span at residues 4–24; that stretch reads FIGQLFGFAVIVYLVWRFIVP. The interval 169 to 446 is ATP synthase subunit delta; sequence LAKMRSASRR…LAAAEARLPD (278 aa).

It in the N-terminal section; belongs to the ATPase B chain family. In the C-terminal section; belongs to the ATPase delta chain family. In terms of assembly, F-type ATPases have 2 components, F(1) - the catalytic core - and F(0) - the membrane proton channel. F(1) has five subunits: alpha(3), beta(3), gamma(1), delta(1), epsilon(1). F(0) has three main subunits: a(1), b(2) and c(10-14). The alpha and beta chains form an alternating ring which encloses part of the gamma chain. F(1) is attached to F(0) by a central stalk formed by the gamma and epsilon chains, while a peripheral stalk is formed by the delta and b chains.

Its subcellular location is the cell membrane. F(1)F(0) ATP synthase produces ATP from ADP in the presence of a proton or sodium gradient. F-type ATPases consist of two structural domains, F(1) containing the extramembraneous catalytic core and F(0) containing the membrane proton channel, linked together by a central stalk and a peripheral stalk. During catalysis, ATP synthesis in the catalytic domain of F(1) is coupled via a rotary mechanism of the central stalk subunits to proton translocation. Its function is as follows. This fusion protein includes a component of the F(0) channel (subunit b) and of the F(1) subunit (subunit delta). Two copies of subunit b and one of delta together form the peripheral 'stator' stalk which links F(1) to F(0). The polypeptide is ATP synthase subunit b-delta (atpFH) (Mycobacterium bovis (strain ATCC BAA-935 / AF2122/97)).